Consider the following 401-residue polypeptide: Adaptive-response sensory kinase SasA (401 aa).

The Histidine kinase domain maps to 175–400 (MLVHDLRNPL…WFHFTLPVYP (226 aa)). His-178 carries the phosphohistidine; by autocatalysis modification.

As to quaternary structure, homooligomerizes. Interacts with KaiC. Participates in the KaiABC clock complex, whose core is composed of a KaiC homohexamer, 6 KaiB and up to 6 KaiA dimers. SasA and KaiB(fs) compete to bind to KaiC.

The catalysed reaction is ATP + protein L-histidine = ADP + protein N-phospho-L-histidine.. Its function is as follows. Member of the two-component regulatory system SasA/RpaA involved in genome-wide circadian gene expression. One of several clock output pathways. Participates in the Kai clock protein complex, the main circadian regulator in cyanobacteria, via its interaction with KaiC. KaiC enhances the autophosphorylation activity of SasA, which then transfers its phosphate group to RpaA to activate it. In addition to its output function, recruits fold-shifted KaiB (KaiB(fs)) to KaiC to cooperatively form the KaiB(6):KaiC(6) complex (independent of SasA kinase activity). Required for robustness of the circadian rhythm of gene expression and is involved in clock output, also required for adaptation to light/dark cycles. This Trichormus variabilis (strain ATCC 29413 / PCC 7937) (Anabaena variabilis) protein is Adaptive-response sensory kinase SasA.